A 279-amino-acid polypeptide reads, in one-letter code: MSSSSASKLLGSVLVFAMISVQIVFIHCVMSLNETNSLNQTNVYLHHICINSQGTYKPGSPYEENLNRVIRAISITISNYGFVHGSNGDAPNTVFGKLQCRGDSYLSKCRSCLTTAFSELRGRCPKNKGRIIWYDNCLLEISPINSLGKIDYEYNFYMYNEKDVNGDTNLFNKNTRALLYRLKEKATSKENNNGKQDLPEIGGKRLGMKMLYATGEKSLRTMKLYGMVQCTKDLSIKDCIVCLNWIIAKLPTCCSNKQGGRVLSTSCNFRYELYRFVKT.

The first 31 residues, Met1–Ser31, serve as a signal peptide directing secretion. 2 Gnk2-homologous domains span residues Tyr44–Ser146 and Tyr152–Phe276.

The protein belongs to the cysteine-rich repeat secretory protein family.

It is found in the secreted. This Arabidopsis thaliana (Mouse-ear cress) protein is Putative cysteine-rich repeat secretory protein 22 (CRRSP22).